Here is a 655-residue protein sequence, read N- to C-terminus: tRNA uridine 5-carboxymethylaminomethyl modification enzyme MnmG (655 aa).

13–18 (GGGHAG) provides a ligand contact to FAD. Position 281 to 295 (281 to 295 (GPRYCPSVEDKINRF)) interacts with NAD(+).

The protein belongs to the MnmG family. As to quaternary structure, homodimer. Heterotetramer of two MnmE and two MnmG subunits. FAD serves as cofactor.

It is found in the cytoplasm. In terms of biological role, NAD-binding protein involved in the addition of a carboxymethylaminomethyl (cmnm) group at the wobble position (U34) of certain tRNAs, forming tRNA-cmnm(5)s(2)U34. The chain is tRNA uridine 5-carboxymethylaminomethyl modification enzyme MnmG from Paracidovorax citrulli (strain AAC00-1) (Acidovorax citrulli).